Reading from the N-terminus, the 145-residue chain is Peptide methionine sulfoxide reductase MsrB (145 aa).

Residues 4–127 (KEELRQRIGD…NSAALKFIPY (124 aa)) enclose the MsrB domain. C116 (nucleophile) is an active-site residue.

Belongs to the MsrB Met sulfoxide reductase family.

The catalysed reaction is L-methionyl-[protein] + [thioredoxin]-disulfide + H2O = L-methionyl-(R)-S-oxide-[protein] + [thioredoxin]-dithiol. The protein is Peptide methionine sulfoxide reductase MsrB of Streptococcus equi subsp. zooepidemicus (strain H70).